Reading from the N-terminus, the 161-residue chain is Cytochrome c-type biogenesis protein CcmE (161 aa).

Topologically, residues 1–8 are cytoplasmic; that stretch reads MNARRKKR. The helical; Signal-anchor for type II membrane protein transmembrane segment at 9-29 threads the bilayer; it reads LTLAVALIGGVAAIASLLLYA. The Periplasmic portion of the chain corresponds to 30 to 161; that stretch reads LNSNLNLFYT…DYNEQQKTSY (132 aa). 2 residues coordinate heme: histidine 131 and tyrosine 135.

The protein belongs to the CcmE/CycJ family.

The protein resides in the cell inner membrane. In terms of biological role, heme chaperone required for the biogenesis of c-type cytochromes. Transiently binds heme delivered by CcmC and transfers the heme to apo-cytochromes in a process facilitated by CcmF and CcmH. The protein is Cytochrome c-type biogenesis protein CcmE of Shewanella sediminis (strain HAW-EB3).